A 570-amino-acid polypeptide reads, in one-letter code: MSMFCYQCQEAAGGRGCTVKGVCGKTEDIAKTQDLIIYVVKGIAIYSSQAREMGLNTSEADKFIVESLFSTITNANFDAKALNSRVQKGLKIRQSLKDDIIKAGGSYNSKENKSWTSKFLSVLGIKNDKDEKEIHDAAIWAANNPEDFKKKAETVGVLATENEDIRSLRELLTYGLKGMAAYLEHANNLGYAEDSIHAFMEKALVATLDDTLSADELTALVLECGKYGVDVMALLDKANTSTYGNPEITKVNIGVRNNPGILISGHDLKDMEELLKQTEGTGVDVYTHSEMLPANYYPAFKKYKHFVGNYGNAWWKQNEEFEAFNGPILMTTNCIVTPKASYKDRMYTTGVTGFEGVKHINPSKDGKKDFSEIIEHAKRCASPKEIEKGEIIGGFAHNQVLALAPQVVDAVKTGAIKRFFVMAGCDGRMKSRNYYTDFAKALPKDTVILTAGCAKYKYNKLDLGDINGIPRVLDAGQCNDSYSLAVIALKLKEVFELEDINELPISYNIAWYEQKAVIVLLALLHLGVKNIHLGPTLPAFLSPNVAKILVENFGIGTISSVDEDIKMFMN.

4 residues coordinate [4Fe-4S] cluster: C5, C8, C17, and C23. Residues H266, E290, C334, C425, C453, C478, E513, and K515 each contribute to the hybrid [4Fe-2O-2S] cluster site. Cysteine persulfide is present on C425.

The protein belongs to the HCP family. The cofactor is [4Fe-4S] cluster. It depends on hybrid [4Fe-2O-2S] cluster as a cofactor.

The protein localises to the cytoplasm. It carries out the reaction A + NH4(+) + H2O = hydroxylamine + AH2 + H(+). In terms of biological role, catalyzes the reduction of hydroxylamine to form NH(3) and H(2)O. The chain is Hydroxylamine reductase from Clostridium botulinum (strain 657 / Type Ba4).